Reading from the N-terminus, the 95-residue chain is Opiscorpine-4 (95 aa).

The N-terminal stretch at 1 to 19 (MNNKLTALIFLGLLAIASC) is a signal peptide. Residues 55–95 (EFMCVANIDMTKSCDTHCQKASGEKGYCHGTKCKCGVPLSY) form the BetaSPN-type CS-alpha/beta domain. Disulfide bonds link Cys-58-Cys-82, Cys-68-Cys-87, and Cys-72-Cys-89.

Belongs to the long chain scorpion toxin family. Class 3 subfamily. Expressed by the venom gland.

It is found in the secreted. In terms of biological role, has antimicrobial activity against yeasts and bacteria. The polypeptide is Opiscorpine-4 (Opistophthalmus carinatus (African yellow leg scorpion)).